Here is a 176-residue protein sequence, read N- to C-terminus: Cathelicidin-2 (176 aa).

A signal peptide spans methionine 1–alanine 29. Glutamine 30 carries the post-translational modification Pyrrolidone carboxylic acid. The propeptide occupies glutamine 30–valine 130. 2 cysteine pairs are disulfide-bonded: cysteine 85-cysteine 96 and cysteine 107-cysteine 124. The interval isoleucine 157 to arginine 176 is disordered. Proline amide is present on proline 173. Positions glycine 174 to arginine 176 are cleaved as a propeptide — removed in mature form.

The protein belongs to the cathelicidin family. Elastase is responsible for its maturation. Large granules of neutrophils.

The protein resides in the secreted. Its function is as follows. Exerts, in vitro, a potent antimicrobial activity. Probably due to an impairment of the function of the respiratory chain and of energy-dependent activities in the inner membrane of susceptible microorganisms. The protein is Cathelicidin-2 (CATHL2) of Bos taurus (Bovine).